The chain runs to 239 residues: Ribonuclease PH (239 aa).

Residues arginine 87 and 125-127 each bind phosphate; that span reads GTR.

The protein belongs to the RNase PH family. Homohexameric ring arranged as a trimer of dimers.

The catalysed reaction is tRNA(n+1) + phosphate = tRNA(n) + a ribonucleoside 5'-diphosphate. Functionally, phosphorolytic 3'-5' exoribonuclease that plays an important role in tRNA 3'-end maturation. Removes nucleotide residues following the 3'-CCA terminus of tRNAs; can also add nucleotides to the ends of RNA molecules by using nucleoside diphosphates as substrates, but this may not be physiologically important. Probably plays a role in initiation of 16S rRNA degradation (leading to ribosome degradation) during starvation. The protein is Ribonuclease PH of Cellvibrio japonicus (strain Ueda107) (Pseudomonas fluorescens subsp. cellulosa).